A 125-amino-acid polypeptide reads, in one-letter code: Fumarate reductase subunit D (125 aa).

A run of 3 helical transmembrane segments spans residues 30–50, 63–83, and 105–125; these read FAMI…LGVI, FATS…PMWH, and IACY…IFMI.

It belongs to the FrdD family. Part of an enzyme complex containing four subunits: a flavoprotein (FrdA), an iron-sulfur protein (FrdB), and two hydrophobic anchor proteins (FrdC and FrdD).

It is found in the cell inner membrane. Functionally, anchors the catalytic components of the fumarate reductase complex to the cell membrane, binds quinones. The sequence is that of Fumarate reductase subunit D from Vibrio campbellii (strain ATCC BAA-1116).